Reading from the N-terminus, the 211-residue chain is Histidine biosynthesis bifunctional protein HisIE (211 aa).

Residues 1–122 (MSVKAAEVSS…DPQEESQMVW (122 aa)) form a phosphoribosyl-AMP cyclohydrolase region. Positions 123 to 211 (LHQLEQLLAA…VINKLKERHK (89 aa)) are phosphoribosyl-ATP pyrophosphohydrolase.

It in the N-terminal section; belongs to the PRA-CH family. The protein in the C-terminal section; belongs to the PRA-PH family.

The protein localises to the cytoplasm. The catalysed reaction is 1-(5-phospho-beta-D-ribosyl)-ATP + H2O = 1-(5-phospho-beta-D-ribosyl)-5'-AMP + diphosphate + H(+). It carries out the reaction 1-(5-phospho-beta-D-ribosyl)-5'-AMP + H2O = 1-(5-phospho-beta-D-ribosyl)-5-[(5-phospho-beta-D-ribosylamino)methylideneamino]imidazole-4-carboxamide. It participates in amino-acid biosynthesis; L-histidine biosynthesis; L-histidine from 5-phospho-alpha-D-ribose 1-diphosphate: step 2/9. It functions in the pathway amino-acid biosynthesis; L-histidine biosynthesis; L-histidine from 5-phospho-alpha-D-ribose 1-diphosphate: step 3/9. This Vibrio vulnificus (strain YJ016) protein is Histidine biosynthesis bifunctional protein HisIE.